We begin with the raw amino-acid sequence, 395 residues long: ATP-dependent RNA helicase eIF4A (395 aa).

Positions 22 to 50 match the Q motif motif; sequence TSFDDLGLKDELLRGIYGYGFENPSSIQQ. Positions 53–223 constitute a Helicase ATP-binding domain; it reads ILPVIKGNDV…GKFMRDPVRI (171 aa). Residue 66–73 coordinates ATP; it reads AQSGTGKT. The DEAD box motif lies at 171–174; it reads DEAD. Residues 234–395 enclose the Helicase C-terminal domain; that stretch reads GIKQFYIDVE…EMPTNIADLI (162 aa).

The protein belongs to the DEAD box helicase family. eIF4A subfamily. Component of the eIF4F complex, which composition varies with external and internal environmental conditions. It is composed of at least eIF4A, eIF4E and eIF4G.

The protein localises to the cytoplasm. The enzyme catalyses ATP + H2O = ADP + phosphate + H(+). ATP-dependent RNA helicase which is a subunit of the eIF4F complex involved in cap recognition and is required for mRNA binding to ribosome. In the current model of translation initiation, eIF4A unwinds RNA secondary structures in the 5'-UTR of mRNAs which is necessary to allow efficient binding of the small ribosomal subunit, and subsequent scanning for the initiator codon. The chain is ATP-dependent RNA helicase eIF4A (TIF1) from Yarrowia lipolytica (strain CLIB 122 / E 150) (Yeast).